Reading from the N-terminus, the 2081-residue chain is Non-reducing polyketide synthase terA (2081 aa).

Residues 85-190 (TLTLAFRIGV…ISLDIFAPFH (106 aa)) are N-terminal acylcarrier protein transacylase (SAT) domain (SAT). The Ketosynthase family 3 (KS3) domain occupies 316 to 749 (AQKIAIVGMA…GGNTGLLLED (434 aa)). Residues Cys488, His623, and His667 each act as for beta-ketoacyl synthase activity in the active site. The malonyl-CoA:ACP transacylase (MAT) domain stretch occupies residues 849 to 1147 (LFTGQGSHYT…LTLPSLRKQE (299 aa)). Residues 1230–1364 (QKVIKEDFGQ…CHVEYGDIKT (135 aa)) form an N-terminal hotdog fold region. The PKS/mFAS DH domain maps to 1230-1539 (QKVIKEDFGQ…FKAIPRAVIN (310 aa)). Residues 1259–1536 (VTGHLVNGSA…GVKFKAIPRA (278 aa)) form a product template (PT) domain region. His1262 (proton acceptor; for dehydratase activity) is an active-site residue. A C-terminal hotdog fold region spans residues 1392–1539 (YQKLDRKAAY…FKAIPRAVIN (148 aa)). Residue Asp1452 is the Proton donor; for dehydratase activity of the active site. The segment at 1549–1578 (KALEKSAPRQNPKATATKTTQKPQAPVPVP) is disordered. The segment covering 1558–1572 (QNPKATATKTTQKPQ) has biased composition (low complexity). The Carrier 1 domain maps to 1580–1658 (KQNKAIIDDF…QVKELILKLA (79 aa)). At Ser1617 the chain carries O-(pantetheine 4'-phosphoryl)serine. The interval 1659 to 1700 (GSSSDENTTDTPDEEEDPATADADNTEMIRENPLESVSPNVS) is disordered. Acidic residues predominate over residues 1665–1677 (NTTDTPDEEEDPA). The Carrier 2 domain occupies 1699–1776 (VSSSEAMDGF…QARLAIASLM (78 aa)). An O-(pantetheine 4'-phosphoryl)serine modification is found at Ser1736. Residues 1783 to 1809 (GATTPYSGSDDAKSSTSSLTAGSVLTP) are disordered. A thioesterase (TE) domain region spans residues 1840–2070 (TLFLLPDGSG…TMMREPKVNQ (231 aa)).

The catalysed reaction is 3 malonyl-CoA + acetyl-CoA + 2 H(+) = orsellinate + 3 CO2 + 4 CoA. It participates in secondary metabolite biosynthesis. Non-reducing polyketide synthase; part of the gene cluster that mediates the biosynthesis of terrein, a fungal metabolite with ecological, antimicrobial, antiproliferative, and antioxidative activities. The first step in the pathway is performed by the polyketide synthase terA that produces 4-hydroxy-6-methylpyranon (4-HMP), orsellinic acid (OA), and 2,3-dehydro-6-hydroxymellein (2,3-dehydro-6-HM) by condensing acetyl-CoA with two, three, or four malonyl-CoA units, respectively. 4-HMP and OA are not pathway intermediates, but are rather shunt or side products. 2,3-dehydro-6-HM is further converted to 6-hydroxymellein (6-HM) by the 6-hydroxymellein synthase terB. The monooxygenases terC and terD, the multicopper oxidase terE and the Kelch-like protein terF are then involved in the transformation of 6-HM to terrein. Even if they are co-regulated with the other terrein cluster genes, terH and terI seem to be dispensable for terrein production; whereas one or both of the 2 transporters terG and terJ are probably required for efficient secretion of metabolites. The protein is Non-reducing polyketide synthase terA of Aspergillus terreus (strain NIH 2624 / FGSC A1156).